The sequence spans 212 residues: Bilin biosynthesis protein PecF (212 aa).

The protein belongs to the CpcE/RpcE/PecE family.

Its function is as follows. An enzyme involved in the biosynthesis of bilin. The sequence is that of Bilin biosynthesis protein PecF (pecF) from Mastigocladus laminosus (Fischerella sp.).